We begin with the raw amino-acid sequence, 97 residues long: Aspartyl/glutamyl-tRNA(Asn/Gln) amidotransferase subunit C (97 aa).

It belongs to the GatC family. Heterotrimer of A, B and C subunits.

It carries out the reaction L-glutamyl-tRNA(Gln) + L-glutamine + ATP + H2O = L-glutaminyl-tRNA(Gln) + L-glutamate + ADP + phosphate + H(+). The catalysed reaction is L-aspartyl-tRNA(Asn) + L-glutamine + ATP + H2O = L-asparaginyl-tRNA(Asn) + L-glutamate + ADP + phosphate + 2 H(+). Functionally, allows the formation of correctly charged Asn-tRNA(Asn) or Gln-tRNA(Gln) through the transamidation of misacylated Asp-tRNA(Asn) or Glu-tRNA(Gln) in organisms which lack either or both of asparaginyl-tRNA or glutaminyl-tRNA synthetases. The reaction takes place in the presence of glutamine and ATP through an activated phospho-Asp-tRNA(Asn) or phospho-Glu-tRNA(Gln). The polypeptide is Aspartyl/glutamyl-tRNA(Asn/Gln) amidotransferase subunit C (Synechococcus sp. (strain CC9311)).